The chain runs to 65 residues: Large ribosomal subunit protein bL28 (65 aa).

It belongs to the bacterial ribosomal protein bL28 family.

This Bifidobacterium animalis subsp. lactis (strain AD011) protein is Large ribosomal subunit protein bL28.